A 428-amino-acid chain; its full sequence is CinA-like protein (428 aa).

This sequence belongs to the CinA family.

The protein is CinA-like protein of Chlorobium phaeovibrioides (strain DSM 265 / 1930) (Prosthecochloris vibrioformis (strain DSM 265)).